The primary structure comprises 342 residues: Putative aryl-alcohol dehydrogenase AAD16 (342 aa).

The protein belongs to the aldo/keto reductase family. Aldo/keto reductase 2 subfamily.

Its function is as follows. Putative aryl-alcohol dehydrogenase. In Saccharomyces cerevisiae (strain ATCC 204508 / S288c) (Baker's yeast), this protein is Putative aryl-alcohol dehydrogenase AAD16.